The primary structure comprises 370 residues: MSLHQFLLEPITCHAWNKDLTQIAISPNNHEVHIYKNSGNQWVKCHELKEHNGHITGIDWAPKSDRIVTCGADRNAYVWSQKDGVWKPTLVILRINRAATFVKWSPLENKFAVGSGARLISVCYFESENDWWVSKHIKKPIRSTVLSLDWHPNNVLLAAGSCDFKTRVFSAYIKEVDEKPASTPWGSKMPFGQMMAEFGGVSSGGWVHSVSFSASGNKLAWVSHDSTVSVADASKNMSVSQLKTEFLPLLSVIFVSENSLIAAGHDCCPMLFTYDEQGSLTFVSKLDIPKQSTQRNISAMERFRNMDKRATTEDRNTTLETLHQNSITQVSIYDGDKTDCRKFCTTGIDGAMTIWDFKTLESYIQGLRIM.

WD repeat units follow at residues 6 to 45, 50 to 89, 140 to 179, 202 to 241, 244 to 284, and 322 to 365; these read FLLEPITCHAWNKDLTQIAISPNNHEVHIYKNSGNQWVKC, EHNGHITGIDWAPKSDRIVTCGADRNAYVWSQKDGVWKPT, PIRSTVLSLDWHPNNVLLAAGSCDFKTRVFSAYIKEVDEK, SSGGWVHSVSFSASGNKLAWVSHDSTVSVADASKNMSVSQ, TEFL…TFVS, and LHQN…SYIQ.

Belongs to the WD repeat ARPC1 family. In terms of assembly, component of the Arp2/3 complex.

It is found in the cytoplasm. The protein resides in the cytoskeleton. Its subcellular location is the nucleus. Probably functions as a component of the Arp2/3 complex which is involved in regulation of actin polymerization and together with an activating nucleation-promoting factor (NPF) mediates the formation of branched actin networks. In addition to its role in the cytoplasmic cytoskeleton, the Arp2/3 complex also promotes actin polymerization in the nucleus, thereby regulating gene transcription and repair of damaged DNA. The sequence is that of Actin-related protein 2/3 complex subunit 1A-B (arpc1a-b) from Xenopus laevis (African clawed frog).